A 1416-amino-acid chain; its full sequence is DNA-directed RNA polymerase subunit beta' (1416 aa).

The Zn(2+) site is built by Cys-71, Cys-73, Cys-86, and Cys-89. 3 residues coordinate Mg(2+): Asp-461, Asp-463, and Asp-465. Zn(2+) is bound by residues Cys-815, Cys-889, Cys-896, and Cys-899.

This sequence belongs to the RNA polymerase beta' chain family. In terms of assembly, the RNAP catalytic core consists of 2 alpha, 1 beta, 1 beta' and 1 omega subunit. When a sigma factor is associated with the core the holoenzyme is formed, which can initiate transcription. Mg(2+) serves as cofactor. Zn(2+) is required as a cofactor.

It carries out the reaction RNA(n) + a ribonucleoside 5'-triphosphate = RNA(n+1) + diphosphate. In terms of biological role, DNA-dependent RNA polymerase catalyzes the transcription of DNA into RNA using the four ribonucleoside triphosphates as substrates. The sequence is that of DNA-directed RNA polymerase subunit beta' from Haemophilus influenzae (strain 86-028NP).